Consider the following 433-residue polypeptide: Steroid hormone receptor ERR2 (433 aa).

The interval 1–38 (MSSEDRHLGSSCGSFIKTEPSSPSSGIDALSHHSPSGS) is disordered. The interaction with NANOG stretch occupies residues 93–211 (YMLNAIPKRL…SPPAKKPLTK (119 aa)). A DNA-binding region (nuclear receptor) is located at residues 100-186 (KRLCLVCGDI…RVRGGRQKYK (87 aa)). 2 NR C4-type zinc fingers span residues 103 to 123 (CLVCGDIASGYHYGVASCEAC) and 139 to 163 (CPATNECEITKRRRKSCQACRFMKC). Residues 203-433 (PPAKKPLTKI…LFLEMLEAKV (231 aa)) form an essential for ESRRB transcriptional activity and interaction with NCOA3 region. The NR LBD domain occupies 208–432 (PLTKIVSNLL…KLFLEMLEAK (225 aa)).

Belongs to the nuclear hormone receptor family. NR3 subfamily. As to quaternary structure, binds DNA as a monomer. Interacts with NR0B1; represses ESRRB activity at the GATA6 promoter. Interacts with NANOG; reciprocally modulates their transcriptional activities and activates POU5F1 expression. Interacts with NCOA3; mediates the interaction between ESRRB and RNA polymerase II complexes and allows NCOA3 corecruitment to ESRRB, KLF4, NANOG, and SOX2 enhancer regions to trigger ESRRB-dependent gene activation involved in self-renewal and pluripotency. Interacts with KDM1A; co-occupes the core set of ESRRB targets including ELF5 and EOMES. Interacts with the multiprotein complex Integrator, at least composed of INTS1, INTS2, INTS3, INTS4, INTS5, INTS6, INTS7, INTS8, INTS9/RC74, INTS10, INTS11/CPSF3L and INTS12; ESRRB is probably not a core component of the integrator complex and associates to integrator via its interaction with INTS1 and INTS9; attracts the transcriptional machinery. Interacts with JARID2. Interacts with POU5F1; recruits ESRRB near the POU5F1-SOX2 element in the NANOG proximal promoter leading to activation of NANOG expression; the interaction is DNA independent. Acetylated by PCAF/KAT2 (in vitro). Highly expressed in undifferentiated ESCs. Expressed in immature horizontal cells and in rod photoreceptors at intermediate and late stages of differentiation. Expressed in endolymph-producing epithelial cells.

The protein localises to the nucleus. It localises to the cytoplasm. It is found in the chromosome. Functionally, transcription factor that binds a canonical ESRRB recognition (ERRE) sequence 5'TCAAGGTCA-3' localized on promoter and enhancer of targets genes regulating their expression or their transcriptional activity. Plays a role, in a LIF-independent manner, in maintainance of self-renewal and pluripotency of embryonic and trophoblast stem cells through different signaling pathways including FGF signaling pathway and Wnt signaling pathways. Involved in morula development (2-16 cells embryos) by acting as a regulator at the 8-cell stage. Upon FGF signaling pathway activation, interacts with KDM1A by directly binding to enhancer site of ELF5 and EOMES and activating their transcription leading to self-renewal of trophoblast stem cells. Also regulates expression of multiple rod-specific genes and is required for survival of this cell type. Plays a role as transcription factor activator of GATA6, NR0B1, POU5F1 and PERM1. Plays a role as transcription factor repressor of NFE2L2 transcriptional activity and ESR1 transcriptional activity. During mitosis remains bound to a subset of interphase target genes, including pluripotency regulators, through the canonical ESRRB recognition (ERRE) sequence, leading to their transcriptional activation in early G1 phase. Can coassemble on structured DNA elements with other transcription factors like SOX2, POU5F1, KDM1A and NCOA3 to trigger ESRRB-dependent gene activation. This mechanism, in the case of SOX2 corecruitment prevents the embryonic stem cells (ESCs) to epiblast stem cells (EpiSC) transition through positive regulation of NR0B1 that inhibits the EpiSC transcriptional program. Also plays a role inner ear development by controlling expression of ion channels and transporters and in early placentation. The chain is Steroid hormone receptor ERR2 from Mus musculus (Mouse).